A 291-amino-acid chain; its full sequence is 4-hydroxy-tetrahydrodipicolinate synthase (291 aa).

A pyruvate-binding site is contributed by Thr-44. Residue Tyr-132 is the Proton donor/acceptor of the active site. Lys-160 functions as the Schiff-base intermediate with substrate in the catalytic mechanism. Position 202 (Ile-202) interacts with pyruvate.

It belongs to the DapA family. In terms of assembly, homotetramer; dimer of dimers.

Its subcellular location is the cytoplasm. It catalyses the reaction L-aspartate 4-semialdehyde + pyruvate = (2S,4S)-4-hydroxy-2,3,4,5-tetrahydrodipicolinate + H2O + H(+). It participates in amino-acid biosynthesis; L-lysine biosynthesis via DAP pathway; (S)-tetrahydrodipicolinate from L-aspartate: step 3/4. Its function is as follows. Catalyzes the condensation of (S)-aspartate-beta-semialdehyde [(S)-ASA] and pyruvate to 4-hydroxy-tetrahydrodipicolinate (HTPA). The sequence is that of 4-hydroxy-tetrahydrodipicolinate synthase from Parvibaculum lavamentivorans (strain DS-1 / DSM 13023 / NCIMB 13966).